The sequence spans 403 residues: ATP phosphoribosyltransferase regulatory subunit (403 aa).

Belongs to the class-II aminoacyl-tRNA synthetase family. HisZ subfamily. Heteromultimer composed of HisG and HisZ subunits.

It is found in the cytoplasm. It functions in the pathway amino-acid biosynthesis; L-histidine biosynthesis; L-histidine from 5-phospho-alpha-D-ribose 1-diphosphate: step 1/9. Functionally, required for the first step of histidine biosynthesis. May allow the feedback regulation of ATP phosphoribosyltransferase activity by histidine. The polypeptide is ATP phosphoribosyltransferase regulatory subunit (Crocosphaera subtropica (strain ATCC 51142 / BH68) (Cyanothece sp. (strain ATCC 51142))).